Reading from the N-terminus, the 259-residue chain is Ribosomal RNA small subunit methyltransferase J (259 aa).

S-adenosyl-L-methionine contacts are provided by residues 107 to 108, 123 to 124, 159 to 160, and Asp177; these read RD, ER, and SS.

It belongs to the methyltransferase superfamily. RsmJ family.

The protein localises to the cytoplasm. It catalyses the reaction guanosine(1516) in 16S rRNA + S-adenosyl-L-methionine = N(2)-methylguanosine(1516) in 16S rRNA + S-adenosyl-L-homocysteine + H(+). Its function is as follows. Specifically methylates the guanosine in position 1516 of 16S rRNA. The polypeptide is Ribosomal RNA small subunit methyltransferase J (Shewanella loihica (strain ATCC BAA-1088 / PV-4)).